The primary structure comprises 206 residues: Large ribosomal subunit protein uL4 (206 aa).

The span at 43 to 52 (NKRQGTQSAK) shows a compositional bias: polar residues. The tract at residues 43–86 (NKRQGTQSAKTRAEVSGGGRKPWRQKGTGHARQGSTRSPQWKGG) is disordered.

The protein belongs to the universal ribosomal protein uL4 family. Part of the 50S ribosomal subunit.

Its function is as follows. One of the primary rRNA binding proteins, this protein initially binds near the 5'-end of the 23S rRNA. It is important during the early stages of 50S assembly. It makes multiple contacts with different domains of the 23S rRNA in the assembled 50S subunit and ribosome. Functionally, forms part of the polypeptide exit tunnel. The polypeptide is Large ribosomal subunit protein uL4 (Lachnoclostridium phytofermentans (strain ATCC 700394 / DSM 18823 / ISDg) (Clostridium phytofermentans)).